A 102-amino-acid chain; its full sequence is NADH-quinone oxidoreductase subunit K (102 aa).

Helical transmembrane passes span Leu5 to Leu25, Ile30 to Ala50, and Val62 to Leu82.

It belongs to the complex I subunit 4L family. NDH-1 is composed of 14 different subunits. Subunits NuoA, H, J, K, L, M, N constitute the membrane sector of the complex.

Its subcellular location is the cell inner membrane. It carries out the reaction a quinone + NADH + 5 H(+)(in) = a quinol + NAD(+) + 4 H(+)(out). NDH-1 shuttles electrons from NADH, via FMN and iron-sulfur (Fe-S) centers, to quinones in the respiratory chain. The immediate electron acceptor for the enzyme in this species is believed to be ubiquinone. Couples the redox reaction to proton translocation (for every two electrons transferred, four hydrogen ions are translocated across the cytoplasmic membrane), and thus conserves the redox energy in a proton gradient. This is NADH-quinone oxidoreductase subunit K from Bradyrhizobium sp. (strain BTAi1 / ATCC BAA-1182).